The following is a 98-amino-acid chain: NADH-ubiquinone oxidoreductase chain 4L (98 aa).

The next 3 membrane-spanning stretches (helical) occupy residues 1–21 (MSLTYFNVMLAFTMSFLGLLM), 30–50 (LLCLEGLMLSLFVLVTITILI), and 61–81 (IILLVFAACEAALGLSLLVAV).

This sequence belongs to the complex I subunit 4L family. Core subunit of respiratory chain NADH dehydrogenase (Complex I) which is composed of 45 different subunits.

The protein localises to the mitochondrion inner membrane. The catalysed reaction is a ubiquinone + NADH + 5 H(+)(in) = a ubiquinol + NAD(+) + 4 H(+)(out). In terms of biological role, core subunit of the mitochondrial membrane respiratory chain NADH dehydrogenase (Complex I) which catalyzes electron transfer from NADH through the respiratory chain, using ubiquinone as an electron acceptor. Part of the enzyme membrane arm which is embedded in the lipid bilayer and involved in proton translocation. The polypeptide is NADH-ubiquinone oxidoreductase chain 4L (MT-ND4L) (Pipistrellus abramus (Japanese pipistrelle)).